We begin with the raw amino-acid sequence, 378 residues long: tRNA (guanine(26)-N(2))-dimethyltransferase (378 aa).

In terms of domain architecture, Trm1 methyltransferase spans 4–374; sequence KEVTEGKVRI…KEYEEITKCI (371 aa). Positions 44, 69, 87, 114, and 115 each coordinate S-adenosyl-L-methionine. Cys-246, Cys-249, Cys-263, and Cys-266 together coordinate Zn(2+).

The protein belongs to the class I-like SAM-binding methyltransferase superfamily. Trm1 family.

It catalyses the reaction guanosine(26) in tRNA + 2 S-adenosyl-L-methionine = N(2)-dimethylguanosine(26) in tRNA + 2 S-adenosyl-L-homocysteine + 2 H(+). In terms of biological role, dimethylates a single guanine residue at position 26 of a number of tRNAs using S-adenosyl-L-methionine as donor of the methyl groups. In Saccharolobus solfataricus (strain ATCC 35092 / DSM 1617 / JCM 11322 / P2) (Sulfolobus solfataricus), this protein is tRNA (guanine(26)-N(2))-dimethyltransferase.